The primary structure comprises 334 residues: MIDSRCFAESTINIVSVSGGKDSLAQWILAVENDVPRTTVFADTGHEHSQTMEYLDYLESRLGPVIRVKADFTRRIEGKRKFIAEKWPVSLVEECGMSHEQAAERIAKALEILKPTGNPFLDLCMWKGRFPSTKARFCSLELKHDSVRDKIVLPALEKYDEVILWQGVRAQESPARAALPMWEEDADNTPGLHVYRPILNWTHEDVFALAKRHGIKPNPLYQQGCSRVGCMPCIHARKSELAEIFARWPEEIARVAEWERLVAACSRRGNSTFFPSTHDPRRAEKRIEVVTVEEYGIASYRDWAMTTRGGSQYDLLAATNDKTVCSSVYAGVCE.

This sequence belongs to the PAPS reductase family.

This is an uncharacterized protein from Escherichia phage 186 (Bacteriophage 186).